The primary structure comprises 618 residues: Chaperone protein dnaK (618 aa).

A disordered region spans residues 595–618 (SKTETTTPNKNEEDVIDASFSEEK).

The protein belongs to the heat shock protein 70 family.

The protein localises to the plastid. It localises to the cyanelle. Functionally, acts as a chaperone. In Cyanophora paradoxa, this protein is Chaperone protein dnaK (dnaK-A).